The chain runs to 118 residues: Fluoride-specific ion channel FluC 2 (118 aa).

4 consecutive transmembrane segments (helical) span residues 1 to 21, 33 to 53, 55 to 75, and 93 to 113; these read MMEA…RFAI, FPIA…YIIG, GVTT…FTTF, and ILFL…FLGM. 2 residues coordinate Na(+): glycine 70 and threonine 73.

It belongs to the fluoride channel Fluc/FEX (TC 1.A.43) family.

The protein resides in the cell membrane. It carries out the reaction fluoride(in) = fluoride(out). Na(+) is not transported, but it plays an essential structural role and its presence is essential for fluoride channel function. Its function is as follows. Fluoride-specific ion channel. Important for reducing fluoride concentration in the cell, thus reducing its toxicity. This is Fluoride-specific ion channel FluC 2 from Bacillus cereus (strain ATCC 10987 / NRS 248).